A 793-amino-acid polypeptide reads, in one-letter code: Probable phosphoketolase (793 aa).

It belongs to the XFP family. Thiamine diphosphate serves as cofactor.

This Streptomyces avermitilis (strain ATCC 31267 / DSM 46492 / JCM 5070 / NBRC 14893 / NCIMB 12804 / NRRL 8165 / MA-4680) protein is Probable phosphoketolase.